The primary structure comprises 516 residues: Putative fatty acyl-CoA reductase CG8306 (516 aa).

The next 3 helical transmembrane spans lie at 356 to 376 (WVFR…LDLV), 471 to 491 (ILLG…FKLI), and 496 to 516 (GIST…FGLL).

This sequence belongs to the fatty acyl-CoA reductase family.

Its subcellular location is the membrane. The enzyme catalyses a long-chain fatty acyl-CoA + 2 NADPH + 2 H(+) = a long-chain primary fatty alcohol + 2 NADP(+) + CoA. In terms of biological role, catalyzes the reduction of C16 or C18 fatty acyl-CoA to fatty alcohols. This Drosophila melanogaster (Fruit fly) protein is Putative fatty acyl-CoA reductase CG8306.